The chain runs to 446 residues: Phosphoglucosamine mutase (446 aa).

S101 (phosphoserine intermediate) is an active-site residue. S101, D240, D242, and D244 together coordinate Mg(2+). Position 101 is a phosphoserine (S101).

This sequence belongs to the phosphohexose mutase family. The cofactor is Mg(2+). Activated by phosphorylation.

The enzyme catalyses alpha-D-glucosamine 1-phosphate = D-glucosamine 6-phosphate. Functionally, catalyzes the conversion of glucosamine-6-phosphate to glucosamine-1-phosphate. In Pseudomonas putida (strain W619), this protein is Phosphoglucosamine mutase.